The following is a 208-amino-acid chain: U11/U12 small nuclear ribonucleoprotein 35 kDa protein (208 aa).

Residues 50–128 form the RRM domain; the sequence is LTLFVARLNP…YELLVDVEQE (79 aa). The disordered stretch occupies residues 133–208; it reads GWRPRRLGGG…TEDRTHRHTY (76 aa). The span at 171-208 shows a compositional bias: basic and acidic residues; the sequence is RPAEPRGRETERERDRRDYRDRRHERTHTEDRTHRHTY.

Its subcellular location is the nucleus. The chain is U11/U12 small nuclear ribonucleoprotein 35 kDa protein (snrnp35) from Danio rerio (Zebrafish).